Here is a 439-residue protein sequence, read N- to C-terminus: Ribosomal protein uS12 methylthiotransferase RimO (439 aa).

Residues 2-114 (SKLYLMSLGC…IDEMILKKTN (113 aa)) form the MTTase N-terminal domain. Residues cysteine 11, cysteine 45, cysteine 77, cysteine 146, cysteine 150, and cysteine 153 each coordinate [4Fe-4S] cluster. Residues 132–363 (TGSNSHAFIK…VDEVIEKSFE (232 aa)) enclose the Radical SAM core domain.

It belongs to the methylthiotransferase family. RimO subfamily. It depends on [4Fe-4S] cluster as a cofactor.

The protein resides in the cytoplasm. It carries out the reaction L-aspartate(89)-[ribosomal protein uS12]-hydrogen + (sulfur carrier)-SH + AH2 + 2 S-adenosyl-L-methionine = 3-methylsulfanyl-L-aspartate(89)-[ribosomal protein uS12]-hydrogen + (sulfur carrier)-H + 5'-deoxyadenosine + L-methionine + A + S-adenosyl-L-homocysteine + 2 H(+). In terms of biological role, catalyzes the methylthiolation of an aspartic acid residue of ribosomal protein uS12. The polypeptide is Ribosomal protein uS12 methylthiotransferase RimO (Campylobacter jejuni subsp. jejuni serotype O:2 (strain ATCC 700819 / NCTC 11168)).